We begin with the raw amino-acid sequence, 1238 residues long: Protein MMS22-like (1238 aa).

Belongs to the MMS22 family. MMS22L subfamily. As to quaternary structure, component of the MMS22L-TONSL complex, a complex at least composed of MMS22L and TONSL/NFKBIL2. Interacts with RAD51; interaction is direct. Post-translationally, degraded by the ubiquitin-proteasome system upon replication stress.

The protein localises to the nucleus. Its subcellular location is the chromosome. In terms of biological role, component of the MMS22L-TONSL complex, a complex that promotes homologous recombination-mediated repair of double-strand breaks (DSBs) at stalled or collapsed replication forks. The MMS22L-TONSL complex is required to maintain genome integrity during DNA replication. It mediates the assembly of RAD51 filaments on single-stranded DNA (ssDNA): the MMS22L-TONSL complex is recruited to DSBs following histone replacement by histone chaperones and eviction of the replication protein A complex (RPA/RP-A) from DSBs. Following recruitment to DSBs, the TONSL-MMS22L complex promotes recruitment of RAD51 filaments and subsequent homologous recombination. Within the complex, MMS22L acts by binding ssDNA. This is Protein MMS22-like (Mms22l) from Mus musculus (Mouse).